Here is a 553-residue protein sequence, read N- to C-terminus: HTH-type transcriptional regulator SgrR (553 aa).

Positions methionine 1–arginine 113 constitute an HTH marR-type domain. A DNA-binding region (H-T-H motif) is located at residues leucine 26–histidine 49. Residues glutamate 163–tryptophan 494 are solute-binding.

Its function is as follows. Activates the small RNA gene sgrS under glucose-phosphate stress conditions as well as yfdZ. Represses its own transcription under both stress and non-stress conditions. Might act as a sensor of the intracellular accumulation of phosphoglucose by binding these molecules in its C-terminal solute-binding domain. The chain is HTH-type transcriptional regulator SgrR from Yersinia pseudotuberculosis serotype I (strain IP32953).